The chain runs to 549 residues: Chaperonin GroEL (549 aa).

ATP-binding positions include 29–32 (TLGP), K50, 86–90 (DGTTT), G414, 478–480 (NAA), and D494.

This sequence belongs to the chaperonin (HSP60) family. In terms of assembly, forms a cylinder of 14 subunits composed of two heptameric rings stacked back-to-back. Interacts with the co-chaperonin GroES.

The protein localises to the cytoplasm. It carries out the reaction ATP + H2O + a folded polypeptide = ADP + phosphate + an unfolded polypeptide.. Its function is as follows. Together with its co-chaperonin GroES, plays an essential role in assisting protein folding. The GroEL-GroES system forms a nano-cage that allows encapsulation of the non-native substrate proteins and provides a physical environment optimized to promote and accelerate protein folding. This chain is Chaperonin GroEL, found in Psychrobacter cryohalolentis (strain ATCC BAA-1226 / DSM 17306 / VKM B-2378 / K5).